Reading from the N-terminus, the 808-residue chain is Sucrose synthase 1 (808 aa).

Residues 277-754 (MVFNVVILSP…GLQRIEEKYT (478 aa)) are GT-B glycosyltransferase.

The protein belongs to the glycosyltransferase 1 family. Plant sucrose synthase subfamily. In terms of assembly, homotetramer. In terms of tissue distribution, expressed in the phloem of leaves and in roots. Detected in the whole plant but more precisely confined to the vasculature in cotyledons, mature leaves and siliques.

The catalysed reaction is an NDP-alpha-D-glucose + D-fructose = a ribonucleoside 5'-diphosphate + sucrose + H(+). Sucrose-cleaving enzyme that provides UDP-glucose and fructose for various metabolic pathways. The chain is Sucrose synthase 1 (SUS1) from Arabidopsis thaliana (Mouse-ear cress).